Reading from the N-terminus, the 205-residue chain is Thymidylate kinase (205 aa).

Residue 11-18 participates in ATP binding; the sequence is GVEGSGKS.

It belongs to the thymidylate kinase family.

It catalyses the reaction dTMP + ATP = dTDP + ADP. Phosphorylation of dTMP to form dTDP in both de novo and salvage pathways of dTTP synthesis. This is Thymidylate kinase from Ruthia magnifica subsp. Calyptogena magnifica.